A 342-amino-acid polypeptide reads, in one-letter code: Endolytic peptidoglycan transglycosylase RlpA (342 aa).

A signal peptide spans Met1–Ser26. Residue Cys27 is the site of N-palmitoyl cysteine attachment. Cys27 carries the S-diacylglycerol cysteine lipid modification. In terms of domain architecture, SPOR spans Ser261–Asp342.

The protein belongs to the RlpA family.

The protein localises to the cell membrane. Its function is as follows. Lytic transglycosylase with a strong preference for naked glycan strands that lack stem peptides. The protein is Endolytic peptidoglycan transglycosylase RlpA of Pseudomonas aeruginosa (strain ATCC 15692 / DSM 22644 / CIP 104116 / JCM 14847 / LMG 12228 / 1C / PRS 101 / PAO1).